The following is a 729-amino-acid chain: ATP-dependent RNA helicase DHX15 homolog (729 aa).

The segment at 1–25 (MSKRRIEVGETYGSKAKKDPEASSS) is disordered. Residues 82-246 (MRLLSLHQCI…FDNAPLMKVP (165 aa)) form the Helicase ATP-binding domain. 95 to 102 (GETGSGKT) is an ATP binding site. The DEAH box motif lies at 193 to 196 (DEAH). One can recognise a Helicase C-terminal domain in the interval 271-451 (TVIQIHMCEE…TVVLQLKKLG (181 aa)).

Belongs to the DEAD box helicase family. DEAH subfamily. DDX15/PRP43 sub-subfamily.

It carries out the reaction ATP + H2O = ADP + phosphate + H(+). RNA helicase involved in mRNA processing and antiviral innate immunity. Acts as an activator of the p38 MAPK cascade. The polypeptide is ATP-dependent RNA helicase DHX15 homolog (Drosophila melanogaster (Fruit fly)).